A 252-amino-acid polypeptide reads, in one-letter code: tRNA (guanine-N(1)-)-methyltransferase (252 aa).

Residues glycine 116 and 135–140 (LGDYVL) contribute to the S-adenosyl-L-methionine site.

It belongs to the RNA methyltransferase TrmD family. As to quaternary structure, homodimer.

It localises to the cytoplasm. It catalyses the reaction guanosine(37) in tRNA + S-adenosyl-L-methionine = N(1)-methylguanosine(37) in tRNA + S-adenosyl-L-homocysteine + H(+). Specifically methylates guanosine-37 in various tRNAs. This Limosilactobacillus fermentum (strain NBRC 3956 / LMG 18251) (Lactobacillus fermentum) protein is tRNA (guanine-N(1)-)-methyltransferase.